The sequence spans 130 residues: Small ribosomal subunit protein uS9 (130 aa).

It belongs to the universal ribosomal protein uS9 family.

This chain is Small ribosomal subunit protein uS9, found in Nitrosomonas eutropha (strain DSM 101675 / C91 / Nm57).